A 465-amino-acid polypeptide reads, in one-letter code: MPHHHSLPTSSADFGDFNSAPASSIQTSSLSQDDLLGSYDETIRHSPSVKSHPSPDPRASNLDLLFLDHNAEEHRRPEPTYSPRSRPTGVLPESVPHARSPRRLSTFSSSTSPTSPPSITDAGCDIIFHPFYDHMDVNATRAMQKMQGHGERGASKRSDKMQLRGQASHSRIAPSSSPPHSRLLDTLATTTKLASKWRSVITHPTSPNTADQTHNGQPKPQIRHAETSPMDITHDTPFASAEQIAGSYIPPTGAPGFTQASVLGMKHHGDGPFEPLTLIGRKDSTSNVLTPEDAIGLKACLPPRQRLTNQWTLLFSLDQHGASLSTLYRLIDIYSVSHQSSGNILVIRDGHGNRFGTYMNEPIVKREGTYYGSGESFLFKLTHSCQTIPYRWTGKNKYFALCEAGFMSFGGGAGAYGLILDSTFTHNSSATCPAYNNDILCELEPLKSQHAQSFQCLGLEVWSTL.

Disordered stretches follow at residues 1-61 (MPHH…RASN), 73-119 (EHRR…PPSI), 144-183 (QKMQGHGERGASKRSDKMQLRGQASHSRIAPSSSPPHSRL), and 202-223 (THPTSPNTADQTHNGQPKPQIR). The segment covering 20–32 (APASSIQTSSLSQ) has biased composition (polar residues). Positions 103 to 113 (RLSTFSSSTSP) are enriched in low complexity. A compositionally biased stretch (basic and acidic residues) spans 148 to 162 (GHGERGASKRSDKMQ). Polar residues-rich tracts occupy residues 165 to 179 (GQASHSRIAPSSSPP) and 202 to 218 (THPTSPNTADQTHNGQP). The TLDc domain occupies 287–465 (NVLTPEDAIG…CLGLEVWSTL (179 aa)).

The protein belongs to the OXR1 family.

Its subcellular location is the mitochondrion. Its function is as follows. May be involved in protection from oxidative damage. The polypeptide is Oxidation resistance protein 1 (OXR1) (Cryptococcus neoformans var. neoformans serotype D (strain JEC21 / ATCC MYA-565) (Filobasidiella neoformans)).